Consider the following 193-residue polypeptide: MEVDLLHFEKKYHNCIVAGIDEAGRGPLAGPVVASAVIVDNANIITGIKDSKKLSKKKRELLYEQITSNYVWATAIISHTEIDDINILEATKKACSIAVANLSLEPEIVLVDGNMQFKDERFVSIINGDNLSLSIAAASIVAKVTRDRLMLDLSAEFPQYLWHKNSGYGTKEHIEAINIYGLSPYHRRSFRCC.

Residues 15–193 (CIVAGIDEAG…PYHRRSFRCC (179 aa)) enclose the RNase H type-2 domain. Residues aspartate 21, glutamate 22, and aspartate 112 each contribute to the a divalent metal cation site.

Belongs to the RNase HII family. Mn(2+) serves as cofactor. The cofactor is Mg(2+).

The protein localises to the cytoplasm. The catalysed reaction is Endonucleolytic cleavage to 5'-phosphomonoester.. Functionally, endonuclease that specifically degrades the RNA of RNA-DNA hybrids. In Rickettsia africae (strain ESF-5), this protein is Ribonuclease HII.